The following is a 149-amino-acid chain: Small ribosomal subunit protein bS18c (149 aa).

A disordered region spans residues 1–23 (MDKITGPFRKSKKSFRKPLPPIQ).

The protein belongs to the bacterial ribosomal protein bS18 family. As to quaternary structure, part of the 30S ribosomal subunit.

It localises to the plastid. This is Small ribosomal subunit protein bS18c from Cuscuta obtusiflora (Peruvian dodder).